Reading from the N-terminus, the 526-residue chain is MLO-like protein 1 (526 aa).

Topologically, residues 1–11 (MGHGGEGMSLE) are extracellular. A helical membrane pass occupies residues 12–32 (FTPTWVVAGVCTVIVAISLAV). Topologically, residues 33–61 (ERLLHYFGTVLKKKKQKPLYEALQKVKEE) are cytoplasmic. Residues 62–82 (LMLLGFISLLLTVFQGLISKF) traverse the membrane as a helical segment. Residues 83-160 (CVKENVLMHM…LSLEALHHLH (78 aa)) are Extracellular-facing. A helical membrane pass occupies residues 161–181 (IFIFVLAISHVTFCVLTVIFG). The Cytoplasmic segment spans residues 182 to 287 (STRIHQWKKW…MRALEDDFKQ (106 aa)). 2 consecutive transmembrane segments (helical) span residues 288–308 (VVGISWYLWIFVVIFLLLNVN) and 309–329 (GWHTYFWIAFIPFALLLAVGT). Topologically, residues 330-372 (KLEHVIAQLAHEVAEKHVAIEGDLVVKPSDEHFWFSKPQIVLY) are cytoplasmic. A helical membrane pass occupies residues 373–393 (LIHFILFQNAFEIAFFFWIWV). At 394 to 412 (TYGFDSCIMGQVRYIVPRL) the chain is on the extracellular side. Residues 413-433 (VIGVFIQVLCSYSTLPLYAIV) traverse the membrane as a helical segment. The Cytoplasmic portion of the chain corresponds to 434–526 (SQMGSSFKKA…NNEITPDHNN (93 aa)). Residues 447–468 (ENVQVGLVGWAQKVKQKRDLKA) form a calmodulin-binding region. The segment at 471–526 (SNGDEGSSQAGPGPDSGSGSAPAAGPGAGFAGIQLSRVTRNNAGDTNNEITPDHNN) is disordered. Residues 476 to 495 (GSSQAGPGPDSGSGSAPAAG) show a composition bias toward low complexity. Positions 506–520 (SRVTRNNAGDTNNEI) are enriched in polar residues.

It belongs to the MLO family.

It is found in the cell membrane. Functionally, may be involved in modulation of pathogen defense and leaf cell death. Activity seems to be regulated by Ca(2+)-dependent calmodulin binding and seems not to require heterotrimeric G proteins. This chain is MLO-like protein 1 (MLO1), found in Arabidopsis thaliana (Mouse-ear cress).